A 425-amino-acid polypeptide reads, in one-letter code: Imidazolonepropionase (425 aa).

2 residues coordinate Fe(3+): His78 and His80. 2 residues coordinate Zn(2+): His78 and His80. 4-imidazolone-5-propanoate-binding residues include Arg87, Tyr150, and His183. Tyr150 is a binding site for N-formimidoyl-L-glutamate. His248 contributes to the Fe(3+) binding site. His248 contributes to the Zn(2+) binding site. Residue Gln251 coordinates 4-imidazolone-5-propanoate. Asp323 is a binding site for Fe(3+). Asp323 contacts Zn(2+). The N-formimidoyl-L-glutamate site is built by Asn325 and Gly327. Position 328 (Thr328) interacts with 4-imidazolone-5-propanoate.

Belongs to the metallo-dependent hydrolases superfamily. HutI family. Zn(2+) serves as cofactor. It depends on Fe(3+) as a cofactor.

The protein localises to the cytoplasm. It catalyses the reaction 4-imidazolone-5-propanoate + H2O = N-formimidoyl-L-glutamate. The protein operates within amino-acid degradation; L-histidine degradation into L-glutamate; N-formimidoyl-L-glutamate from L-histidine: step 3/3. Catalyzes the hydrolytic cleavage of the carbon-nitrogen bond in imidazolone-5-propanoate to yield N-formimidoyl-L-glutamate. It is the third step in the universal histidine degradation pathway. The polypeptide is Imidazolonepropionase (Polaromonas sp. (strain JS666 / ATCC BAA-500)).